Consider the following 549-residue polypeptide: Undecaprenyl phosphate-alpha-4-amino-4-deoxy-L-arabinose arabinosyl transferase (549 aa).

Transmembrane regions (helical) follow at residues 9–29, 80–100, 112–132, 133–153, 176–196, 204–224, 256–276, 288–308, 312–332, 346–366, 376–396, and 402–422; these read LLLI…GLWI, LFGV…LAYL, SLAC…SGYA, NLDP…WHAL, FLTK…PYML, LLGY…PWAL, PWWF…GLLP, QAPV…FSLS, LPTY…HALV, NGLL…YLQL, FELF…LAQW, and AWAA…AAMP.

Belongs to the glycosyltransferase 83 family.

The protein resides in the cell inner membrane. It carries out the reaction 4-amino-4-deoxy-alpha-L-arabinopyranosyl di-trans,octa-cis-undecaprenyl phosphate + lipid IVA = lipid IIA + di-trans,octa-cis-undecaprenyl phosphate.. It participates in lipopolysaccharide metabolism; 4-amino-4-deoxy-beta-L-arabinose-lipid A biosynthesis. Functionally, catalyzes the transfer of the L-Ara4N moiety of the glycolipid undecaprenyl phosphate-alpha-L-Ara4N to lipid A. The modified arabinose is attached to lipid A and is required for resistance to polymyxin and cationic antimicrobial peptides. This Pseudomonas aeruginosa (strain LESB58) protein is Undecaprenyl phosphate-alpha-4-amino-4-deoxy-L-arabinose arabinosyl transferase.